The following is a 235-amino-acid chain: Small ribosomal subunit protein uS3 (235 aa).

The 69-residue stretch at isoleucine 39–arginine 107 folds into the KH type-2 domain. Residues glutamine 215–alanine 235 are disordered.

Belongs to the universal ribosomal protein uS3 family. As to quaternary structure, part of the 30S ribosomal subunit. Forms a tight complex with proteins S10 and S14.

Binds the lower part of the 30S subunit head. Binds mRNA in the 70S ribosome, positioning it for translation. In Rhodopseudomonas palustris (strain ATCC BAA-98 / CGA009), this protein is Small ribosomal subunit protein uS3.